We begin with the raw amino-acid sequence, 176 residues long: Vitamin K epoxide reductase complex subunit 1-like protein 1 (176 aa).

Residues 1-13 lie on the Cytoplasmic side of the membrane; it reads MAAPVLLRVSVPR. Residues 14-36 form a helical membrane-spanning segment; that stretch reads WERVARYAVCAAGILLSIYAYHV. Residues 37 to 87 are Lumenal-facing; it reads EREKERDPEHRALCDLGPWVKCSAALASRWGRGFGLLGSIFGKDGVLNQPN. A disulfide bridge links cysteine 50 with cysteine 58. (S)-warfarin is bound at residue asparagine 87. A helical transmembrane segment spans residues 88–102; sequence SVFGLIFYILQLLLG. Over 103–107 the chain is Cytoplasmic; that stretch reads MTASA. Residues 108–135 traverse the membrane as a helical segment; it reads VAALVLMTSSIVSVVGSLYLAYILYFVL. Topologically, residues 136–138 are lumenal; the sequence is KEF. Cysteines 139 and 142 form a disulfide. Residues 139 to 160 traverse the membrane as a helical segment; sequence CIICVTTYVLNFLLLIINYKRL. Positions 142 and 146 each coordinate phylloquinone. Residue tyrosine 146 participates in (S)-warfarin binding. Topologically, residues 161–176 are cytoplasmic; sequence VYLNEAWKRQLQPKED.

Belongs to the VKOR family. In terms of tissue distribution, detected in testis and lung.

It is found in the endoplasmic reticulum membrane. The catalysed reaction is phylloquinone + [protein]-disulfide + H2O = 2,3-epoxyphylloquinone + [protein]-dithiol. It catalyses the reaction phylloquinol + [protein]-disulfide = phylloquinone + [protein]-dithiol. With respect to regulation, inhibited by warfarin (coumadin). Warfarin locks VKORC1 in both redox states into the closed conformation. Involved in vitamin K metabolism. Can reduce inactive vitamin K 2,3-epoxide to active vitamin K, and may contribute to vitamin K-mediated protection against oxidative stress. Plays a role in vitamin K-dependent gamma-carboxylation of Glu residues in target proteins. This Mus musculus (Mouse) protein is Vitamin K epoxide reductase complex subunit 1-like protein 1 (Vkorc1l1).